The following is a 363-amino-acid chain: Fructose-bisphosphate aldolase (363 aa).

Arg56 and Lys147 together coordinate substrate. The active-site Proton acceptor is the Glu188. The active-site Schiff-base intermediate with dihydroxyacetone-P is the Lys230.

Belongs to the class I fructose-bisphosphate aldolase family.

The enzyme catalyses beta-D-fructose 1,6-bisphosphate = D-glyceraldehyde 3-phosphate + dihydroxyacetone phosphate. It participates in carbohydrate degradation; glycolysis; D-glyceraldehyde 3-phosphate and glycerone phosphate from D-glucose: step 4/4. The chain is Fructose-bisphosphate aldolase from Schistosoma mansoni (Blood fluke).